A 469-amino-acid chain; its full sequence is Sulfate adenylyltransferase subunit 1 (469 aa).

The tr-type G domain occupies 22-237; that stretch reads KEVLRFITCG…LEEVPVKSEE (216 aa). Positions 31 to 38 are G1; the sequence is GSVDDGKS. 31–38 provides a ligand contact to GTP; the sequence is GSVDDGKS. Residues 89 to 93 are G2; the sequence is GITID. The segment at 110-113 is G3; the sequence is DTPG. GTP is bound by residues 110-114 and 165-168; these read DTPGH and NKMD. A G4 region spans residues 165 to 168; sequence NKMD. Residues 202 to 204 form a G5 region; that stretch reads SAK.

The protein belongs to the TRAFAC class translation factor GTPase superfamily. Classic translation factor GTPase family. CysN/NodQ subfamily. In terms of assembly, heterodimer composed of CysD, the smaller subunit, and CysN.

The enzyme catalyses sulfate + ATP + H(+) = adenosine 5'-phosphosulfate + diphosphate. It functions in the pathway sulfur metabolism; hydrogen sulfide biosynthesis; sulfite from sulfate: step 1/3. With CysD forms the ATP sulfurylase (ATPS) that catalyzes the adenylation of sulfate producing adenosine 5'-phosphosulfate (APS) and diphosphate, the first enzymatic step in sulfur assimilation pathway. APS synthesis involves the formation of a high-energy phosphoric-sulfuric acid anhydride bond driven by GTP hydrolysis by CysN coupled to ATP hydrolysis by CysD. The polypeptide is Sulfate adenylyltransferase subunit 1 (Methylorubrum extorquens (strain CM4 / NCIMB 13688) (Methylobacterium extorquens)).